The chain runs to 426 residues: Chromatin structure-remodeling complex subunit SFH1 (426 aa).

Ser-78 bears the Phosphoserine mark. The interaction with STH1 stretch occupies residues 201–242; sequence AIMIPITLDIEHMGHTIKDQFLWNYNDDSISPEEFASIYCKD.

The protein belongs to the SNF5 family. In terms of assembly, interacts directly with STH1. Component of the two forms of the RSC complex composed of at least either RSC1 or RSC2, and ARP7, ARP9, LDB7, NPL6, RSC3, RSC30, RSC4, RSC58, RSC6, RSC8, RSC9, SFH1, STH1, HTL1 and probably RTT102. The complexes interact with histone and histone variant components of centromeric chromatin. In terms of processing, phosphorylated in the G1 phase.

The protein localises to the nucleus. In terms of biological role, component of the chromatin structure-remodeling complex (RSC), which is involved in transcription regulation and nucleosome positioning. RSC is responsible for the transfer of a histone octamer from a nucleosome core particle to naked DNA. The reaction requires ATP and involves an activated RSC-nucleosome intermediate. Remodeling reaction also involves DNA translocation, DNA twist and conformational change. As a reconfigurer of centromeric and flanking nucleosomes, RSC complex is required both for proper kinetochore function in chromosome segregation and, via a PKC1-dependent signaling pathway, for organization of the cellular cytoskeleton. This subunit is essential for mitotic growth and required for cell cycle progression. This chain is Chromatin structure-remodeling complex subunit SFH1 (SFH1), found in Saccharomyces cerevisiae (strain ATCC 204508 / S288c) (Baker's yeast).